The following is a 233-amino-acid chain: Phosphoribosylformylglycinamidine synthase subunit PurQ (233 aa).

The 231-residue stretch at 3-233 folds into the Glutamine amidotransferase type-1 domain; sequence SAILVFPGIN…GLVAHLERAA (231 aa). The active-site Nucleophile is the Cys87. Catalysis depends on residues His204 and Glu206.

Part of the FGAM synthase complex composed of 1 PurL, 1 PurQ and 2 PurS subunits.

It is found in the cytoplasm. The enzyme catalyses N(2)-formyl-N(1)-(5-phospho-beta-D-ribosyl)glycinamide + L-glutamine + ATP + H2O = 2-formamido-N(1)-(5-O-phospho-beta-D-ribosyl)acetamidine + L-glutamate + ADP + phosphate + H(+). The catalysed reaction is L-glutamine + H2O = L-glutamate + NH4(+). It functions in the pathway purine metabolism; IMP biosynthesis via de novo pathway; 5-amino-1-(5-phospho-D-ribosyl)imidazole from N(2)-formyl-N(1)-(5-phospho-D-ribosyl)glycinamide: step 1/2. In terms of biological role, part of the phosphoribosylformylglycinamidine synthase complex involved in the purines biosynthetic pathway. Catalyzes the ATP-dependent conversion of formylglycinamide ribonucleotide (FGAR) and glutamine to yield formylglycinamidine ribonucleotide (FGAM) and glutamate. The FGAM synthase complex is composed of three subunits. PurQ produces an ammonia molecule by converting glutamine to glutamate. PurL transfers the ammonia molecule to FGAR to form FGAM in an ATP-dependent manner. PurS interacts with PurQ and PurL and is thought to assist in the transfer of the ammonia molecule from PurQ to PurL. The polypeptide is Phosphoribosylformylglycinamidine synthase subunit PurQ (Nitrobacter hamburgensis (strain DSM 10229 / NCIMB 13809 / X14)).